The sequence spans 373 residues: MLVSQRVTGARARAPQLAGLLEAWYRHGRTTSSYSALSEPSRVRALVYGNHGDPAKVVQLKNLELTAVEGSDVHVRMLAAPINPSDINMIQGNYGLLPKLPAVGGNEGVGQVIAVGSSVSALKPGDWVIPANAGLGTWRTEAVFSEEALIGIPKDIPLQSAATLGVNPCTAYRMLVDFEQLQPGDSVIQNASNSGVGQAVIQIASALRLKTINVVRDRPDIKKLTDRLKDLGADYVLTEEELRMPETKTIFKDLPLPRLALNCVGGKSSTELLRHLAPGGTMVTYGGMAKQPVTASVSLLIFKDLKLRGFWLSQWKKNHSPDEFKELILTLCNLIRQGRLTAPSCSEVPLQGYQQALEASMKPFVSSKQILTM.

A mitochondrion-targeting transit peptide spans 1–53; that stretch reads MLVSQRVTGARARAPQLAGLLEAWYRHGRTTSSYSALSEPSRVRALVYGNHGD. Position 61 is an N6-acetyllysine; alternate (lysine 61). The residue at position 61 (lysine 61) is an N6-succinyllysine; alternate. The active-site Proton donor is tyrosine 94. Residues asparagine 167, 193–196, and 216–218 each bind NADP(+); these read NSGV and RDR. Residues lysine 252 and lysine 267 each carry the N6-acetyllysine; alternate modification. Residues lysine 252 and lysine 267 each carry the N6-succinyllysine; alternate modification. NADP(+) is bound by residues 285–288 and 310–312; these read YGGM and FWL. At lysine 316 the chain carries N6-succinyllysine. Position 368 (lysine 368) interacts with NADP(+).

It belongs to the zinc-containing alcohol dehydrogenase family. Quinone oxidoreductase subfamily. As to quaternary structure, homodimer. In terms of tissue distribution, expressed in Purkinje cells (at protein level).

Its subcellular location is the mitochondrion. The enzyme catalyses a 2,3-saturated acyl-[ACP] + NADP(+) = a (2E)-enoyl-[ACP] + NADPH + H(+). The catalysed reaction is (2E)-butenoyl-[ACP] + NADPH + H(+) = butanoyl-[ACP] + NADP(+). It catalyses the reaction (2E)-hexenoyl-[ACP] + NADPH + H(+) = hexanoyl-[ACP] + NADP(+). It carries out the reaction (2E)-octenoyl-[ACP] + NADPH + H(+) = octanoyl-[ACP] + NADP(+). The enzyme catalyses (2E)-decenoyl-[ACP] + NADPH + H(+) = decanoyl-[ACP] + NADP(+). The catalysed reaction is (2E)-dodecenoyl-[ACP] + NADPH + H(+) = dodecanoyl-[ACP] + NADP(+). It catalyses the reaction (2E)-tetradecenoyl-[ACP] + NADPH + H(+) = tetradecanoyl-[ACP] + NADP(+). It carries out the reaction (2E)-hexadecenoyl-[ACP] + NADPH + H(+) = hexadecanoyl-[ACP] + NADP(+). Its function is as follows. Catalyzes the NADPH-dependent reduction of trans-2-enoyl thioesters in mitochondrial fatty acid synthesis (fatty acid synthesis type II). Fatty acid chain elongation in mitochondria uses acyl carrier protein (ACP) as an acyl group carrier, but the enzyme accepts both ACP and CoA thioesters as substrates in vitro. Displays a preference for medium-chain over short- and long-chain substrates. May provide the octanoyl chain used for lipoic acid biosynthesis, regulating protein lipoylation and mitochondrial respiratory activity particularly in Purkinje cells. Involved in iron homeostasis; affecting Fe-S cluster assembly and ceramide metabolism. Required for proper morphology and bioenergetic functions of mitochondria. Required for maintenance of neurons. In Mus musculus (Mouse), this protein is Enoyl-[acyl-carrier-protein] reductase, mitochondrial (Mecr).